Here is a 501-residue protein sequence, read N- to C-terminus: Lysine--tRNA ligase (501 aa).

The Mg(2+) site is built by Glu-402 and Glu-409.

Belongs to the class-II aminoacyl-tRNA synthetase family. As to quaternary structure, homodimer. It depends on Mg(2+) as a cofactor.

The protein resides in the cytoplasm. It catalyses the reaction tRNA(Lys) + L-lysine + ATP = L-lysyl-tRNA(Lys) + AMP + diphosphate. The chain is Lysine--tRNA ligase (lysS) from Helicobacter pylori (strain J99 / ATCC 700824) (Campylobacter pylori J99).